A 175-amino-acid polypeptide reads, in one-letter code: uncharacterized protein (175 aa).

The segment at 113–175 (AQLPRDSRGN…RTRSGGLERL (63 aa)) is disordered.

This is an uncharacterized protein from Bos taurus (Bovine).